Here is a 189-residue protein sequence, read N- to C-terminus: Elongation factor P (189 aa).

Lysine 34 carries the N6-(3,6-diaminohexanoyl)-5-hydroxylysine modification.

It belongs to the elongation factor P family. In terms of processing, may be beta-lysylated on the epsilon-amino group of Lys-34 by the combined action of EpmA and EpmB, and then hydroxylated on the C5 position of the same residue by EpmC (if this protein is present). Lysylation is critical for the stimulatory effect of EF-P on peptide-bond formation. The lysylation moiety may extend toward the peptidyltransferase center and stabilize the terminal 3-CCA end of the tRNA. Hydroxylation of the C5 position on Lys-34 may allow additional potential stabilizing hydrogen-bond interactions with the P-tRNA.

The protein resides in the cytoplasm. It functions in the pathway protein biosynthesis; polypeptide chain elongation. Its function is as follows. Involved in peptide bond synthesis. Alleviates ribosome stalling that occurs when 3 or more consecutive Pro residues or the sequence PPG is present in a protein, possibly by augmenting the peptidyl transferase activity of the ribosome. Modification of Lys-34 is required for alleviation. This Alkalilimnicola ehrlichii (strain ATCC BAA-1101 / DSM 17681 / MLHE-1) protein is Elongation factor P.